The chain runs to 390 residues: Flap endonuclease 1-1 (390 aa).

Positions 1–108 (MGIHQLMQFL…GELARRKKLK (108 aa)) are N-domain. Asp34 serves as a coordination point for Mg(2+). Arg74 serves as a coordination point for DNA. The Mg(2+) site is built by Asp90, Glu162, Glu164, Asp183, and Asp185. The tract at residues 126–254 (QALLQHQRTT…GTAYKLIKEF (129 aa)) is I-domain. Glu162 provides a ligand contact to DNA. Positions 232 and 234 each coordinate DNA. A Mg(2+)-binding site is contributed by Asp234. The interaction with PCNA stretch occupies residues 348-356 (FQSRLENFF). Residues 359-390 (TTKIIHPNNSKAKGKANKKNEQTQKSGGKKKI) form a disordered region.

The protein belongs to the XPG/RAD2 endonuclease family. FEN1 subfamily. As to quaternary structure, interacts with PCNA. Three molecules of FEN1 bind to one PCNA trimer with each molecule binding to one PCNA monomer. PCNA stimulates the nuclease activity without altering cleavage specificity. Mg(2+) is required as a cofactor. Post-translationally, phosphorylated. Phosphorylation upon DNA damage induces relocalization to the nuclear plasma.

The protein resides in the nucleus. It localises to the nucleolus. The protein localises to the nucleoplasm. Its subcellular location is the mitochondrion. Functionally, structure-specific nuclease with 5'-flap endonuclease and 5'-3' exonuclease activities involved in DNA replication and repair. During DNA replication, cleaves the 5'-overhanging flap structure that is generated by displacement synthesis when DNA polymerase encounters the 5'-end of a downstream Okazaki fragment. It enters the flap from the 5'-end and then tracks to cleave the flap base, leaving a nick for ligation. Also involved in the long patch base excision repair (LP-BER) pathway, by cleaving within the apurinic/apyrimidinic (AP) site-terminated flap. Acts as a genome stabilization factor that prevents flaps from equilibrating into structures that lead to duplications and deletions. Also possesses 5'-3' exonuclease activity on nicked or gapped double-stranded DNA, and exhibits RNase H activity. Also involved in replication and repair of rDNA and in repairing mitochondrial DNA. The polypeptide is Flap endonuclease 1-1 (Paramecium tetraurelia).